A 425-amino-acid polypeptide reads, in one-letter code: Serine--tRNA ligase (425 aa).

233-235 is a binding site for L-serine; it reads TAE. ATP is bound by residues 264-266 and valine 280; that span reads RRE. Glutamate 287 lines the L-serine pocket. 351–354 lines the ATP pocket; that stretch reads EVSS. Serine 387 contributes to the L-serine binding site.

The protein belongs to the class-II aminoacyl-tRNA synthetase family. Type-1 seryl-tRNA synthetase subfamily. In terms of assembly, homodimer. The tRNA molecule binds across the dimer.

The protein resides in the cytoplasm. The enzyme catalyses tRNA(Ser) + L-serine + ATP = L-seryl-tRNA(Ser) + AMP + diphosphate + H(+). The catalysed reaction is tRNA(Sec) + L-serine + ATP = L-seryl-tRNA(Sec) + AMP + diphosphate + H(+). It functions in the pathway aminoacyl-tRNA biosynthesis; selenocysteinyl-tRNA(Sec) biosynthesis; L-seryl-tRNA(Sec) from L-serine and tRNA(Sec): step 1/1. Its function is as follows. Catalyzes the attachment of serine to tRNA(Ser). Is also able to aminoacylate tRNA(Sec) with serine, to form the misacylated tRNA L-seryl-tRNA(Sec), which will be further converted into selenocysteinyl-tRNA(Sec). This is Serine--tRNA ligase from Gemmatimonas aurantiaca (strain DSM 14586 / JCM 11422 / NBRC 100505 / T-27).